The primary structure comprises 1465 residues: MSDLFAKLMDQIEMPLDMRRSSAFSSADIIEVKVHSVSRLWEFHFAFAAVLPIATYRELHDRLIRTFEAADIKVTFDIQAAQVDYSDDLLQAYYQEAFEHAPCNSASFKSSFSKLKVTYEDDKLIIAAPGFVNNDHFRNNHLPNLVKQLEAFGFGILTIDMVSDQEMTEHLTKNFVSSRQALVKKAVQDNLEAQKSLEAMMPPVEEATPAPKFDYKERAAKRQAGFEKATITPMIEIETEENRIVFEGMVFDVERKTTRTGRHIINFKMTDYTSSFALQKWAKDDEELRKFDMIAKGAWLRVQGNIETNPFTKSLTMNVQQVKEIVRHERKDLMPEGQKRVELHAHTNMSTMDALPTVESLIDTAAKWGHKAIAITDHANVQSFPHGYHRARKAGIKAIFGLEANIVEDKVPISYEPVDMDLHEDLCGLSDVETTGLSAMNNDLIQIAASKMFKGNIVEQFDEFIDPGHPLSAFTTELTGITDKHLQGAKPLVTVLKAFQDFCKDSILVAHNASFDVGFMNANYERHDLPKITQPVIDTLEFARNLYPEYKRHGLGPLTKRFQVSLDHHHMANYDAEATGRLLFIFLKDAREKHGIKNLLQLNTDLVAEDSYKKARIKHATIYVQNQVGLKNMFKLVSLSNIKYFEGVPRIPRTVLDAHREGLLLGTACSDGEVFDAVLTKGIDAAVDLARYYDFIEIMPPAIYQPLVVRELIKDQAGIEQVIRDLIEVGKRAKKPVLATGNVHYLEPEEEIYREIIVRSLGQGAMINRTIGRGEGAQPAPLPKAHFRTTNEMLDEFAFLGKDLAYQVVVQNTQDFADRIEEVEVVKGDLYTPYIDKAEETVAELTYQKAFEIYGNPLPDIIDLRIEKELTSILGNGFAVIYLASQMLVNRSNERGYLVGSRGSVGSSFVATMIGITEVNPMPPHYVCPSCQHSEFITDGSVGSGYDLPNKPCPKCGTPYQKDGQDIPFETFLGFDGDKVPDIDLNFSGDDQPSAHLDVRDIFGDEYAFRAGTVGTVAEKTAYGFVKGYERDYGKFYRDAEVDRLAAGAAGVKRTTGQHPGGIVVIPNYMDVYDFTPVQYPADDVTASWQTTHFNFHDIDENVLKLDILGHDDPTMIRKLQDLSGIDPITIPADDPGVMALFSGTEVLGVTPEQIGTPTGMLGIPEFGTNFVRGMVNETHPTTFAELLQLSGLSHGTDVWLGNAQDLIKEGIATLKTVIGCRDDIMVYLMHAGLEPKMAFTIMERVRKGLWLKISEEERNGYIDAMRENNVPDWYIESCGKIKYMFPKAHAAAYVLMALRVAYFKVHHPIMYYCAYFSIRAKAFELKTMSGGLDAVKARMEDITIKRKNNEATNVENDLFTTLEIVNEMLERGFKFGKLDLYKSDAIEFQIKGDTLIPPFIALEGLGENVAKQIVKARQEGEFLSKMELRKRGGASSTLVEKMDEMGILGNMPEDNQLSLFDDFF.

An Exonuclease domain is found at 431–583 (DVETTGLSAM…YDAEATGRLL (153 aa)).

It belongs to the DNA polymerase type-C family. PolC subfamily.

It localises to the cytoplasm. The enzyme catalyses DNA(n) + a 2'-deoxyribonucleoside 5'-triphosphate = DNA(n+1) + diphosphate. Its function is as follows. Required for replicative DNA synthesis. This DNA polymerase also exhibits 3' to 5' exonuclease activity. The sequence is that of DNA polymerase III PolC-type from Streptococcus pyogenes.